Here is a 141-residue protein sequence, read N- to C-terminus: Hemoglobin subunit alpha (141 aa).

The Globin domain occupies 1–141; that stretch reads VLSPADKANI…VSTVLTSKYR (141 aa). Phosphoserine is present on serine 3. 2 positions are modified to N6-succinyllysine: lysine 7 and lysine 11. At lysine 16 the chain carries N6-acetyllysine; alternate. Lysine 16 is modified (N6-succinyllysine; alternate). Tyrosine 24 carries the phosphotyrosine modification. Serine 35 carries the phosphoserine modification. Lysine 40 is subject to N6-succinyllysine. Serine 49 is modified (phosphoserine). Histidine 58 is a binding site for O2. Histidine 87 provides a ligand contact to heme b. Serine 102 is modified (phosphoserine). The residue at position 108 (threonine 108) is a Phosphothreonine. 2 positions are modified to phosphoserine: serine 124 and serine 131. 2 positions are modified to phosphothreonine: threonine 134 and threonine 137. Serine 138 is modified (phosphoserine).

This sequence belongs to the globin family. In terms of assembly, heterotetramer of two alpha chains and two beta chains. Red blood cells.

Functionally, involved in oxygen transport from the lung to the various peripheral tissues. Hemopressin acts as an antagonist peptide of the cannabinoid receptor CNR1. Hemopressin-binding efficiently blocks cannabinoid receptor CNR1 and subsequent signaling. In Meles meles (Eurasian badger), this protein is Hemoglobin subunit alpha (HBA).